A 408-amino-acid chain; its full sequence is Multifunctional CCA protein (408 aa).

Gly8 and Arg11 together coordinate ATP. 2 residues coordinate CTP: Gly8 and Arg11. Asp21 and Asp23 together coordinate Mg(2+). The ATP site is built by Arg91, Arg137, and Arg140. CTP is bound by residues Arg91, Arg137, and Arg140. The 102-residue stretch at 228-329 (SGVHTLMVLE…VKLFDKADFW (102 aa)) folds into the HD domain.

Belongs to the tRNA nucleotidyltransferase/poly(A) polymerase family. Bacterial CCA-adding enzyme type 1 subfamily. As to quaternary structure, monomer. Can also form homodimers and oligomers. Mg(2+) is required as a cofactor. The cofactor is Ni(2+).

It carries out the reaction a tRNA precursor + 2 CTP + ATP = a tRNA with a 3' CCA end + 3 diphosphate. The enzyme catalyses a tRNA with a 3' CCA end + 2 CTP + ATP = a tRNA with a 3' CCACCA end + 3 diphosphate. Catalyzes the addition and repair of the essential 3'-terminal CCA sequence in tRNAs without using a nucleic acid template. Adds these three nucleotides in the order of C, C, and A to the tRNA nucleotide-73, using CTP and ATP as substrates and producing inorganic pyrophosphate. tRNA 3'-terminal CCA addition is required both for tRNA processing and repair. Also involved in tRNA surveillance by mediating tandem CCA addition to generate a CCACCA at the 3' terminus of unstable tRNAs. While stable tRNAs receive only 3'-terminal CCA, unstable tRNAs are marked with CCACCA and rapidly degraded. The sequence is that of Multifunctional CCA protein from Shewanella piezotolerans (strain WP3 / JCM 13877).